We begin with the raw amino-acid sequence, 927 residues long: Isoleucine--tRNA ligase (927 aa).

The 'HIGH' region motif lies at 57–67 (PYANGHIHIGH). Glutamate 561 contacts L-isoleucyl-5'-AMP. The short motif at 602 to 606 (KMSKS) is the 'KMSKS' region element. Lysine 605 serves as a coordination point for ATP. Residues cysteine 897, cysteine 900, cysteine 917, and cysteine 920 each contribute to the Zn(2+) site.

Belongs to the class-I aminoacyl-tRNA synthetase family. IleS type 1 subfamily. In terms of assembly, monomer. Zn(2+) serves as cofactor.

The protein resides in the cytoplasm. It catalyses the reaction tRNA(Ile) + L-isoleucine + ATP = L-isoleucyl-tRNA(Ile) + AMP + diphosphate. Catalyzes the attachment of isoleucine to tRNA(Ile). As IleRS can inadvertently accommodate and process structurally similar amino acids such as valine, to avoid such errors it has two additional distinct tRNA(Ile)-dependent editing activities. One activity is designated as 'pretransfer' editing and involves the hydrolysis of activated Val-AMP. The other activity is designated 'posttransfer' editing and involves deacylation of mischarged Val-tRNA(Ile). This Syntrophotalea carbinolica (strain DSM 2380 / NBRC 103641 / GraBd1) (Pelobacter carbinolicus) protein is Isoleucine--tRNA ligase.